A 752-amino-acid polypeptide reads, in one-letter code: DNA topoisomerase 4 subunit A (752 aa).

The Topo IIA-type catalytic domain maps to 31 to 494 (LPFIGDGLKP…EAKAMSEHDM (464 aa)). The O-(5'-phospho-DNA)-tyrosine intermediate role is filled by Tyr120. Positions 472 to 492 (YGDDRRSPLREREEAKAMSEH) are disordered. Residues 473 to 492 (GDDRRSPLREREEAKAMSEH) are compositionally biased toward basic and acidic residues.

It belongs to the type II topoisomerase GyrA/ParC subunit family. ParC type 1 subfamily. In terms of assembly, heterotetramer composed of ParC and ParE.

The protein localises to the cell membrane. The catalysed reaction is ATP-dependent breakage, passage and rejoining of double-stranded DNA.. Its function is as follows. Topoisomerase IV is essential for chromosome segregation. It relaxes supercoiled DNA. Performs the decatenation events required during the replication of a circular DNA molecule. This is DNA topoisomerase 4 subunit A from Salmonella typhimurium (strain LT2 / SGSC1412 / ATCC 700720).